Consider the following 319-residue polypeptide: Plasmodesmata-located protein 4 (319 aa).

Positions 1-26 are cleaved as a signal peptide; it reads MVVHLISLLTQTLALIILSLPSIINT. At 27 to 288 the chain is on the extracellular side; it reads SQLDYDTLVF…EGSKVNTGKS (262 aa). Cystine bridges form between Cys-39/Cys-127, Cys-103/Cys-112, Cys-115/Cys-140, Cys-177/Cys-247, Cys-223/Cys-232, and Cys-235/Cys-260. Gnk2-homologous domains lie at 45-149 and 170-269; these read NILQ…FERI and HGLI…YHPH. Residues 289–309 form a helical membrane-spanning segment; sequence LAIVVGGVAALVFVAIFFMFL. A necessary and sufficient for plasmodesmal targeting region spans residues 289-309; sequence LAIVVGGVAALVFVAIFFMFL. At 310–319 the chain is on the cytoplasmic side; that stretch reads KSLRKKGDDC.

The protein belongs to the cysteine-rich repeat secretory protein family. Plasmodesmata-located proteins (PDLD) subfamily. In terms of assembly, (Microbial infection) Interacts with Grapevine fanleaf virus (GFLV) 2B-MP. Highly expressed in seeds and roots.

It localises to the cell membrane. It is found in the cell junction. The protein resides in the plasmodesma. Modulates cell-to-cell trafficking. This chain is Plasmodesmata-located protein 4, found in Arabidopsis thaliana (Mouse-ear cress).